The following is a 624-amino-acid chain: Phosphomethylpyrimidine synthase (624 aa).

The segment at 75–99 (SPWIESRGDTESYTGRTPFALDDGL) is disordered. Substrate-binding positions include Asn226, Met255, Tyr284, His320, 340 to 342 (SRG), 381 to 384 (DGLR), and Glu420. His424 contributes to the Zn(2+) binding site. Position 447 (Tyr447) interacts with substrate. Residue His488 participates in Zn(2+) binding. Residues Cys568, Cys571, and Cys576 each contribute to the [4Fe-4S] cluster site.

Belongs to the ThiC family. Homodimer. The cofactor is [4Fe-4S] cluster.

It carries out the reaction 5-amino-1-(5-phospho-beta-D-ribosyl)imidazole + S-adenosyl-L-methionine = 4-amino-2-methyl-5-(phosphooxymethyl)pyrimidine + CO + 5'-deoxyadenosine + formate + L-methionine + 3 H(+). The protein operates within cofactor biosynthesis; thiamine diphosphate biosynthesis. Catalyzes the synthesis of the hydroxymethylpyrimidine phosphate (HMP-P) moiety of thiamine from aminoimidazole ribotide (AIR) in a radical S-adenosyl-L-methionine (SAM)-dependent reaction. The protein is Phosphomethylpyrimidine synthase of Albidiferax ferrireducens (strain ATCC BAA-621 / DSM 15236 / T118) (Rhodoferax ferrireducens).